Reading from the N-terminus, the 149-residue chain is Protein FAM72A (149 aa).

Belongs to the FAM72 family. As to quaternary structure, interacts with UNG. In terms of tissue distribution, expressed at high levels in stomach and also in kidney and, at low levels, in heart (at protein level). In the stomach, highly expressed in foveolar cells, parietal cells and chief cells (at protein level). In kidney, expressed in endothelial cells, mesangial and epithelial cells (parietal and visceral epithelium) around glomerulus (at protein level).

The protein localises to the cytoplasm. The protein resides in the mitochondrion. Functionally, may play a role in the regulation of cellular reactive oxygen species metabolism. May participate in cell growth regulation. In Bos taurus (Bovine), this protein is Protein FAM72A (FAM72A).